Consider the following 542-residue polypeptide: Calcium-dependent protein kinase 15 (542 aa).

The interval 1-73 (MGARASRHRQ…QAPQQAAAED (73 aa)) is disordered. Residue G2 is the site of N-myristoyl glycine attachment. Over residues 12–21 (PDQSQSQSPS) the composition is skewed to low complexity. Over residues 22–40 (PHHKHHHHHQTTRAPKPKP) the composition is skewed to basic residues. Over residues 41-60 (KPQPPPPQQPRSQPPPPPRH) the composition is skewed to pro residues. Positions 61–71 (QPQQAPQQAAA) are enriched in low complexity. The 259-residue stretch at 90 to 348 (YTFGRELGRG…AAEILNHPWI (259 aa)) folds into the Protein kinase domain. ATP contacts are provided by residues 96–104 (LGRGQFGVT) and K119. Catalysis depends on D214, which acts as the Proton acceptor. The autoinhibitory domain stretch occupies residues 354-384 (APDKPLDITVISRMKQFRAMNKLKKVALKVV). EF-hand domains are found at residues 391-426 (EEIV…LGTK), 427-462 (ISES…MNRL), 463-497 (EKED…KYDM), and 498-533 (GDEA…NSPE). Residues D404, D406, S408, T410, E415, D440, D442, N444, S446, E451, D476, D478, S480, E487, D511, D513, D515, R517, and E522 each coordinate Ca(2+).

It belongs to the protein kinase superfamily. Ser/Thr protein kinase family. CDPK subfamily.

It is found in the membrane. It carries out the reaction L-seryl-[protein] + ATP = O-phospho-L-seryl-[protein] + ADP + H(+). It catalyses the reaction L-threonyl-[protein] + ATP = O-phospho-L-threonyl-[protein] + ADP + H(+). With respect to regulation, activated by calcium. Autophosphorylation may play an important role in the regulation of the kinase activity. May play a role in signal transduction pathways that involve calcium as a second messenger. The sequence is that of Calcium-dependent protein kinase 15 from Oryza sativa subsp. japonica (Rice).